A 195-amino-acid polypeptide reads, in one-letter code: MAAQTAASEAPAPAAAPADSPTTAGPTPDSVGRDLVAENMIKDYVLAAVAASIVPVPLFDIAAVVAIELRMIQKLSELYGKPFSESLGRSVIASLAGGVVGYGAGMAVAVSLTKLIPGVGWMLGMVSLPVIAGATTYAIGRVFVKHYENGGDIFNLSADAMRAYYKQQFEKGKALAAKVKARKEAAAVDDVAAAH.

The span at Met-1–Pro-28 shows a compositional bias: low complexity. Residues Met-1–Val-31 are disordered. Helical transmembrane passes span Val-45–Val-65, Ser-90–Val-110, and Leu-115–Thr-135.

Its subcellular location is the magnetosome membrane. This chain is Magnetosome membrane protein 22, found in Magnetospirillum gryphiswaldense (strain DSM 6361 / JCM 21280 / NBRC 15271 / MSR-1).